Consider the following 150-residue polypeptide: UPF0756 membrane protein NTHI1233 (150 aa).

The next 4 membrane-spanning stretches (helical) occupy residues 1–21, 52–72, 81–101, and 123–143; these read MTLQ…LGVL, YGVK…LVSG, GFLS…AWLA, and IIGV…AGIL.

This sequence belongs to the UPF0756 family.

The protein resides in the cell membrane. This Haemophilus influenzae (strain 86-028NP) protein is UPF0756 membrane protein NTHI1233.